The sequence spans 220 residues: Protein CREG1 (220 aa).

The first 31 residues, 1 to 31 (MAARAPELARSLLAALLAPALVALLVSPASG), serve as a signal peptide directing secretion. The segment at 30–53 (SGRGGRDHGDWDVDRRLPPLPPRE) is disordered. Over residues 33–53 (GGRDHGDWDVDRRLPPLPPRE) the composition is skewed to basic and acidic residues. 2 N-linked (GlcNAc...) asparagine glycosylation sites follow: asparagine 160 and asparagine 216.

It belongs to the CREG family. In terms of assembly, homodimer. Interacts with IGF2R; the interaction is dependent on glycosylation. N-glycosylated. Widely expressed.

It is found in the secreted. Functionally, may contribute to the transcriptional control of cell growth and differentiation. Antagonizes transcriptional activation and cellular transformation by the adenovirus E1A protein. The transcriptional control activity of cell growth requires interaction with IGF2R. The protein is Protein CREG1 (Creg1) of Mus musculus (Mouse).